We begin with the raw amino-acid sequence, 227 residues long: Lipoprotein-releasing system ATP-binding protein LolD (227 aa).

In terms of domain architecture, ABC transporter spans 7-227 (LSCRDLGKSY…HLQEGHLVAI (221 aa)). 43–50 (GTSGSGKS) contributes to the ATP binding site.

This sequence belongs to the ABC transporter superfamily. Lipoprotein translocase (TC 3.A.1.125) family. The complex is composed of two ATP-binding proteins (LolD) and two transmembrane proteins (LolC and LolE).

It is found in the cell inner membrane. Functionally, part of the ABC transporter complex LolCDE involved in the translocation of mature outer membrane-directed lipoproteins, from the inner membrane to the periplasmic chaperone, LolA. Responsible for the formation of the LolA-lipoprotein complex in an ATP-dependent manner. This Pseudomonas fluorescens (strain ATCC BAA-477 / NRRL B-23932 / Pf-5) protein is Lipoprotein-releasing system ATP-binding protein LolD.